The following is a 642-amino-acid chain: Stress-activated map kinase-interacting protein 1 homolog (642 aa).

The CRIM domain occupies 189-314 (ARIREVIGYC…EREPLFQGLL (126 aa)). The tract at residues 603–642 (IVSPSSDAPSRSSNGKNGGKFRKMSSLMASVMGRRKSDSK) is disordered. Positions 605 to 615 (SPSSDAPSRSS) are enriched in low complexity.

It belongs to the SIN1 family. As to quaternary structure, component of the target of rapamycin complex 2 (TORC2).

In terms of biological role, component of the target of rapamycin complex 2 (TORC2), which transduces signals from growth factors to pathways involved in proliferation, cytoskeletal organization and anabolic output. In response to growth factors, TORC2 phosphorylates and activates AGC protein kinase family members, such as Akt1. Within the TORC2 complex, sinh-1 acts as a substrate adapter which recognizes and binds AGC protein kinase family members for phosphorylation by mTor. The sequence is that of Stress-activated map kinase-interacting protein 1 homolog (sinh-1) from Caenorhabditis elegans.